The sequence spans 279 residues: Lacto-N-neotetraose biosynthesis glycosyltransferase LgtB (279 aa).

This sequence belongs to the glycosyltransferase 25 family.

It functions in the pathway glycan metabolism; lacto-N-neotetraose biosynthesis. It participates in bacterial outer membrane biogenesis; lipooligosaccharide biosynthesis. Adds the second galactose to the lacto-N-tetraose chain in lipooligosaccharide (LOS). The chain is Lacto-N-neotetraose biosynthesis glycosyltransferase LgtB (lgtB) from Neisseria meningitidis serogroup A / serotype 4A (strain DSM 15465 / Z2491).